The primary structure comprises 123 residues: Large ribosomal subunit protein uL29 (123 aa).

The disordered stretch occupies residues 84–123; that stretch reads RPKKTRAMRRRLNKHEEGLKTKKQQRKERLYPPRKYAVKA. The segment covering 86 to 96 has biased composition (basic residues); the sequence is KKTRAMRRRLN.

Belongs to the universal ribosomal protein uL29 family. As to quaternary structure, component of the large ribosomal subunit.

It localises to the cytoplasm. Functionally, component of the large ribosomal subunit. The ribosome is a large ribonucleoprotein complex responsible for the synthesis of proteins in the cell. The polypeptide is Large ribosomal subunit protein uL29 (RPL35) (Ophiophagus hannah (King cobra)).